The chain runs to 877 residues: DNA polymerase I (877 aa).

In terms of domain architecture, 5'-3' exonuclease spans 180–272; the sequence is TPSQFIDLKA…GLEDTLLKEK (93 aa). Positions 312-468 constitute a 3'-5' exonuclease domain; that stretch reads FEIVTDKSSV…AKEKMMAELI (157 aa).

This sequence belongs to the DNA polymerase type-A family. In terms of assembly, single-chain monomer with multiple functions.

The catalysed reaction is DNA(n) + a 2'-deoxyribonucleoside 5'-triphosphate = DNA(n+1) + diphosphate. In terms of biological role, in addition to polymerase activity, this DNA polymerase exhibits 3'-5' and 5'-3' exonuclease activity. This is DNA polymerase I (polA) from Lactococcus lactis subsp. cremoris (strain MG1363).